Consider the following 26-residue polypeptide: Acetylcholine receptor subunit delta (26 aa).

It belongs to the ligand-gated ion channel (TC 1.A.9) family. Acetylcholine receptor (TC 1.A.9.1) subfamily. As to quaternary structure, pentamer of two alpha chains, and one each of the beta, delta, and gamma chains.

The protein localises to the postsynaptic cell membrane. It is found in the cell membrane. The enzyme catalyses K(+)(in) = K(+)(out). It catalyses the reaction Na(+)(in) = Na(+)(out). Its function is as follows. After binding acetylcholine, the AChR responds by an extensive change in conformation that affects all subunits and leads to opening of an ion-conducting channel across the plasma membrane. This chain is Acetylcholine receptor subunit delta (chrnd), found in Electrophorus electricus (Electric eel).